The following is a 550-amino-acid chain: Arginine--tRNA ligase (550 aa).

The 'HIGH' region motif lies at Ala130–Gly140.

Belongs to the class-I aminoacyl-tRNA synthetase family. In terms of assembly, monomer.

The protein localises to the cytoplasm. It catalyses the reaction tRNA(Arg) + L-arginine + ATP = L-arginyl-tRNA(Arg) + AMP + diphosphate. The polypeptide is Arginine--tRNA ligase (Mycolicibacterium paratuberculosis (strain ATCC BAA-968 / K-10) (Mycobacterium paratuberculosis)).